The following is a 375-amino-acid chain: MSKGKIIVAMSGGVDSAVTAGLLMEDGYEVIGVNLRTWEYEAPACDTTKKSCCSPEDIRDARDVGISLKIPFYVIKMEKVFQEKVIDRFIEDYQHGKTPNPCVECNTFVKFGALFEKAKALGIDKIATGHYARIARNGERYAIANGIDVGKNQAYYLYGLSQENLKNVIFPLGEMTKPEVRQIARRMGLPVADKSESQEICFIPENDYRKFLEKKNVEFTPGFFKLKDGRIVGKHKGRENFTIGQRKGLGIAWKNPLYVISIEDDGSVILGEENETYNESFSVIDLNFQGLAPLNEGESLECRVQVRYRHIPIRCKITKMKEGLIVHPLEDVRGVTPGQSAVFYPLDSDYLLLGGIISKGSIQMRIVEPAISVLN.

Residues 9-16 (AMSGGVDS) and Leu35 each bind ATP. Residue Cys105 is the Nucleophile of the active site. A disulfide bridge connects residues Cys105 and Cys201. Gly129 is an ATP binding site. The interaction with tRNA stretch occupies residues 151–153 (KNQ). Cys201 acts as the Cysteine persulfide intermediate in catalysis. Residues 307–308 (RY) are interaction with tRNA.

It belongs to the MnmA/TRMU family.

It localises to the cytoplasm. The catalysed reaction is S-sulfanyl-L-cysteinyl-[protein] + uridine(34) in tRNA + AH2 + ATP = 2-thiouridine(34) in tRNA + L-cysteinyl-[protein] + A + AMP + diphosphate + H(+). In terms of biological role, catalyzes the 2-thiolation of uridine at the wobble position (U34) of tRNA, leading to the formation of s(2)U34. This is tRNA-specific 2-thiouridylase MnmA from Leptospira interrogans serogroup Icterohaemorrhagiae serovar Lai (strain 56601).